Here is a 373-residue protein sequence, read N- to C-terminus: MKSGRYIGVMSGTSLDGVDVVLAAIDGRMVAQQASYSHPMPLQLKQDILGMCQGQQTTLSAVGRLDAQLGTLFGEAVLGLLKQTGVAAHDITAIGCHGQTVWHEPEGDARFSMQLGDNNRIAALTNITTVGDFRRRDMAYGGQGAPLVPAFHQALLSHPVERRMVLNIGGIANLSMLLPGAAVRGFDTGPGNMLMDAWIWRHQSQPYDKDGGWAMAGRVCLPLLQQMLADPYFSLPAPKSTGREYFNAAWLERQLAGLAAVSPVDVQTTLTELTAVTICEQVQLAGGCERLLVCGGGARNMLLMARMSALLPGTEVCLTDDFGISGDDMEALAFAWLAFRTLSGQPGNLPSVTGASCETLLGGIYPVLPLGGR.

ATP is bound at residue 12 to 19; sequence GTSLDGVD.

Belongs to the anhydro-N-acetylmuramic acid kinase family.

It carries out the reaction 1,6-anhydro-N-acetyl-beta-muramate + ATP + H2O = N-acetyl-D-muramate 6-phosphate + ADP + H(+). It functions in the pathway amino-sugar metabolism; 1,6-anhydro-N-acetylmuramate degradation. Its pathway is cell wall biogenesis; peptidoglycan recycling. Its function is as follows. Catalyzes the specific phosphorylation of 1,6-anhydro-N-acetylmuramic acid (anhMurNAc) with the simultaneous cleavage of the 1,6-anhydro ring, generating MurNAc-6-P. Is required for the utilization of anhMurNAc either imported from the medium or derived from its own cell wall murein, and thus plays a role in cell wall recycling. The protein is Anhydro-N-acetylmuramic acid kinase of Serratia proteamaculans (strain 568).